The primary structure comprises 107 residues: MNKKELFDAFDGFSQNLMVTLAEIEAMKKQVQSLVEENTILRLENTKLRERLSHLEHETAAKNPSKQRKDHLEGIYDEGFHICNFFYGQRRENDEECMFCRELLDRK.

Zn(2+) contacts are provided by His-81, Cys-83, Cys-97, and Cys-100.

This sequence belongs to the YabA family. As to quaternary structure, homotetramer. Interacts with both DnaA and DnaN, acting as a bridge between these two proteins. The cofactor is Zn(2+).

The protein resides in the cytoplasm. It localises to the nucleoid. Involved in control of chromosome replication initiation. Inhibits the cooperative binding of DnaA to the oriC region, thus negatively regulating initiation of chromosome replication. Inhibits the ability of DnaA-ATP to form a helix on DNA; does not disassemble preformed DnaA-DNA helices. Decreases the residence time of DnaA on the chromosome at its binding sites (oriC, replication forks and promoter-binding sites). Tethers DnaA to the replication machinery via the DNA polymerase beta sliding clamp subunit (dnaN). Associates with oriC and other DnaA targets on the chromosome in a DnaA-dependent manner. This is Replication initiation control protein YabA from Streptococcus pyogenes serotype M3 (strain ATCC BAA-595 / MGAS315).